The chain runs to 347 residues: MRVDLFDFELPQELIALRPAVPRDSARLLVAAGAGAIDDRIVRDLPQLLMPGDVLVFNDTRVIPAQLTGKRGEATVGVTLHKRLDLRRWQAFVRNAKRLAPGDTVDFGNDVSADVEDRADDGSFTFAFRGDEPVEVLLDRAGTMPLPPYIAGKRATDERDRDDYQTMFAREDGAVAAPTAALHFTSELIAALDERGVARQTLTLHVGAGTFLPVKADDTDDHRMHSEWGRIEHDTADRLNAAKSRGGRIIAVGTTSLRLLESATGEDGVIRTFAGDTDIFITPGYRFRAVDGLMTNFHLPKSTLMMLVSALMGRERMMDIYAHAIAQRYRFYSYGDSSLLIPEGNTK.

This sequence belongs to the QueA family. In terms of assembly, monomer.

It is found in the cytoplasm. It carries out the reaction 7-aminomethyl-7-carbaguanosine(34) in tRNA + S-adenosyl-L-methionine = epoxyqueuosine(34) in tRNA + adenine + L-methionine + 2 H(+). It participates in tRNA modification; tRNA-queuosine biosynthesis. Its function is as follows. Transfers and isomerizes the ribose moiety from AdoMet to the 7-aminomethyl group of 7-deazaguanine (preQ1-tRNA) to give epoxyqueuosine (oQ-tRNA). The polypeptide is S-adenosylmethionine:tRNA ribosyltransferase-isomerase (Erythrobacter litoralis (strain HTCC2594)).